A 143-amino-acid polypeptide reads, in one-letter code: Large ribosomal subunit protein uL13c (143 aa).

It belongs to the universal ribosomal protein uL13 family. Part of the 50S ribosomal subunit.

It is found in the plastid. The protein resides in the chloroplast. The sequence is that of Large ribosomal subunit protein uL13c from Gracilaria tenuistipitata var. liui (Red alga).